A 275-amino-acid polypeptide reads, in one-letter code: Rhamnulose-1-phosphate aldolase (275 aa).

Glutamate 117 is an active-site residue. Histidine 141, histidine 143, and histidine 212 together coordinate Zn(2+).

The protein belongs to the aldolase class II family. RhaD subfamily. In terms of assembly, homotetramer. Zn(2+) is required as a cofactor.

The protein localises to the cytoplasm. The catalysed reaction is L-rhamnulose 1-phosphate = (S)-lactaldehyde + dihydroxyacetone phosphate. Its pathway is carbohydrate degradation; L-rhamnose degradation; glycerone phosphate from L-rhamnose: step 3/3. Functionally, catalyzes the reversible cleavage of L-rhamnulose-1-phosphate to dihydroxyacetone phosphate (DHAP) and L-lactaldehyde. The protein is Rhamnulose-1-phosphate aldolase of Salmonella heidelberg (strain SL476).